The sequence spans 296 residues: GTPase Era (296 aa).

Residues 3–170 (KSGFVTIVGR…KELMFKYIPE (168 aa)) enclose the Era-type G domain. A G1 region spans residues 11–18 (GRPNVGKS). 11–18 (GRPNVGKS) provides a ligand contact to GTP. The segment at 37–41 (QTTRN) is G2. The segment at 58-61 (DTPG) is G3. GTP is bound by residues 58–62 (DTPGI) and 120–123 (NKID). A G4 region spans residues 120–123 (NKID). The segment at 149-151 (ISA) is G5. In terms of domain architecture, KH type-2 spans 201–278 (LSEEVPHGIA…YIRLWVKVKE (78 aa)).

The protein belongs to the TRAFAC class TrmE-Era-EngA-EngB-Septin-like GTPase superfamily. Era GTPase family. As to quaternary structure, monomer.

It is found in the cytoplasm. Its subcellular location is the cell membrane. Functionally, an essential GTPase that binds both GDP and GTP, with rapid nucleotide exchange. Plays a role in 16S rRNA processing and 30S ribosomal subunit biogenesis and possibly also in cell cycle regulation and energy metabolism. The polypeptide is GTPase Era (Clostridium botulinum (strain Langeland / NCTC 10281 / Type F)).